The following is a 399-amino-acid chain: Tetracycline resistance protein, class A (399 aa).

12 consecutive transmembrane segments (helical) span residues 7–29 (LIVI…PVLP), 44–66 (HYGI…LGAL), 73–95 (RPVL…TAPF), 99–121 (LYIG…AYIA), 133–155 (FGFM…GLMG), 160–182 (HAPF…FLLP), 203–225 (FRWA…MQLV), 245–267 (ATTI…AMIT), 279–298 (ALML…AFAT), 302–324 (MAFP…QAML), 336–358 (LQGS…FTAI), and 368–390 (GWAW…RGLW).

The protein belongs to the major facilitator superfamily. TCR/Tet family.

The protein localises to the cell inner membrane. Resistance to tetracycline by an active tetracycline efflux. This is an energy-dependent process that decreases the accumulation of the antibiotic in whole cells. This protein functions as a metal-tetracycline/H(+) antiporter. This Escherichia coli protein is Tetracycline resistance protein, class A (tetA).